The sequence spans 271 residues: Serine O-acetyltransferase (271 aa).

The Acyl-thioester intermediate role is filled by Cys-112. The active-site Proton acceptor is His-204. Glu-206 is a catalytic residue.

Belongs to the MetA family.

The enzyme catalyses L-serine + acetyl-CoA = O-acetyl-L-serine + CoA. It participates in amino-acid biosynthesis; L-cysteine biosynthesis; L-cysteine from L-serine: step 1/2. Its function is as follows. Catalyzes the formation of O-acetylserine (OAS) from L-serine and acetyl-CoA. To a lesser extent, is also able to use succinyl-CoA and propionyl-CoA as acyl donors, but not butyryl-CoA. Does not acylate D-serine and L-homoserine. This Lacticaseibacillus casei (Lactobacillus casei) protein is Serine O-acetyltransferase.